The sequence spans 252 residues: F-box protein At5g39250 (252 aa).

Residues 1–42 form the F-box domain; that stretch reads MFSEEVLKNVFPLLEGEDLASCMGVCKQWRDIARDDFYWKCQ.

The polypeptide is F-box protein At5g39250 (Arabidopsis thaliana (Mouse-ear cress)).